Here is a 346-residue protein sequence, read N- to C-terminus: Immunoglobulin heavy constant alpha (346 aa).

Ig-like domains follow at residues 6–96 (PSIF…KSVD), 118–212 (PRLS…VSIT), and 221–323 (PQVH…KSID). The cysteines at positions 26 and 83 are disulfide-linked. Residue asparagine 134 is glycosylated (N-linked (GlcNAc...) (complex) asparagine). Disulfide bonds link cysteine 139-cysteine 196 and cysteine 243-cysteine 306. Asparagine 333 is a glycosylation site (N-linked (GlcNAc...) (complex) asparagine).

Immunoglobulins are composed of two identical heavy chains and two identical light chains; disulfide-linked. Monomeric or polymeric. Part of the secretory IgA (sIgA) complex that consists of two, four or five IgA monomers, and two additional non-Ig polypeptides, namely the JCHAIN and the secretory component (the proteolytic product of PIGR). Post-translationally, N-glycosylated. N-glycans attached to Asn-134 varies from differentially fucosylated complex and hybrid to sialylated with N-glycoyl neuraminic acid types: GlcNAc2Man3GlcNAc2(Fuc); GlcNAc1Man4GlcNAc2(Fuc); GlcNAc1Man4GlcNAc2; Gal1GlcNAc2Man3GlcNAc2(Fuc); GlcNAc2Man3GlcNAc2; Gal1GlcNAc2Man3GlcNAc2; GlcNAc1Man3GlcNAc2; GlcNAc1Man2GlcNAc2 and NeuGc1Gal1GlcNAc2Man3GlcNAc2(Fuc). N-glycans attached to Asn-333 are mainly fucosylated complex types: GlcNAc2Man3GlcNAc2; GlcNAc1Man3GlcNAc2; GlcNAc1Man3GlcNAc2(Fuc); GlcNAc2Man3GlcNAc2(Fuc); Gal1GlcNAc2Man3GlcNAc2(Fuc); NeuGc1Gal1GlcNAc1Man3GlcNAc2(Fuc); NeuGc1Gal1GlcNAc2Man3GlcNAc2(Fuc) and NeuAc1Gal1GlcNAc2Man3GlcNAc2(Fuc).

The protein resides in the secreted. The protein localises to the cell membrane. Functionally, constant region of immunoglobulin heavy chains. Immunoglobulins, also known as antibodies, are membrane-bound or secreted glycoproteins produced by B lymphocytes. In the recognition phase of humoral immunity, the membrane-bound immunoglobulins serve as receptors which, upon binding of a specific antigen, trigger the clonal expansion and differentiation of B lymphocytes into immunoglobulins-secreting plasma cells. Secreted immunoglobulins mediate the effector phase of humoral immunity, which results in the elimination of bound antigens. The antigen binding site is formed by the variable domain of one heavy chain, together with that of its associated light chain. Thus, each immunoglobulin has two antigen binding sites with remarkable affinity for a particular antigen. The variable domains are assembled by a process called V-(D)-J rearrangement and can then be subjected to somatic hypermutations which, after exposure to antigen and selection, allow affinity maturation for a particular antigen. Ig alpha is the major immunoglobulin class in body secretions. This chain is Immunoglobulin heavy constant alpha (IGHA), found in Equus asinus (Donkey).